A 260-amino-acid chain; its full sequence is Thiazole synthase (260 aa).

K96 acts as the Schiff-base intermediate with DXP in catalysis. 1-deoxy-D-xylulose 5-phosphate is bound by residues G157, 184–185 (AG), and 206–207 (NT).

This sequence belongs to the ThiG family. Homotetramer. Forms heterodimers with either ThiH or ThiS.

Its subcellular location is the cytoplasm. It catalyses the reaction [ThiS sulfur-carrier protein]-C-terminal-Gly-aminoethanethioate + 2-iminoacetate + 1-deoxy-D-xylulose 5-phosphate = [ThiS sulfur-carrier protein]-C-terminal Gly-Gly + 2-[(2R,5Z)-2-carboxy-4-methylthiazol-5(2H)-ylidene]ethyl phosphate + 2 H2O + H(+). The protein operates within cofactor biosynthesis; thiamine diphosphate biosynthesis. In terms of biological role, catalyzes the rearrangement of 1-deoxy-D-xylulose 5-phosphate (DXP) to produce the thiazole phosphate moiety of thiamine. Sulfur is provided by the thiocarboxylate moiety of the carrier protein ThiS. In vitro, sulfur can be provided by H(2)S. This is Thiazole synthase from Bradyrhizobium diazoefficiens (strain JCM 10833 / BCRC 13528 / IAM 13628 / NBRC 14792 / USDA 110).